The chain runs to 388 residues: MAFQLTPLRVALVAGEPSGDLLGASLLGGLHARLPASSRYYGIGGPRMSAVEFDAHWPMEKLAVRGYVEALKHIPEILRIRGELKRQLLAEPPDAFVGIDAPDFNFGLEQALRGAGIPTIHFVCPSIWAWRGGRIKKIVKAVDHMLCLFPFEPELLEKAGVAATFVGHPLADEIPLEPDTHGARIALGLPDGGPVIAVLPGSRRSEIELIGPTFFDAMELMQQREPGVRFVVPAATPVLRALLQPLVDAHPSLSVTLTEGRAQVAMTAADAILVKSGTVTLEAALLKKPMVISYKVPWLTGQIMRRQGYLPYVGLPNILAGRFVVPELLQHFATPDALADATLTQLRDDANRRALTDIFTDMHLALRQNTAQRAAEAVARVIDSRKPR.

This sequence belongs to the LpxB family.

The enzyme catalyses a lipid X + a UDP-2-N,3-O-bis[(3R)-3-hydroxyacyl]-alpha-D-glucosamine = a lipid A disaccharide + UDP + H(+). The protein operates within bacterial outer membrane biogenesis; LPS lipid A biosynthesis. Condensation of UDP-2,3-diacylglucosamine and 2,3-diacylglucosamine-1-phosphate to form lipid A disaccharide, a precursor of lipid A, a phosphorylated glycolipid that anchors the lipopolysaccharide to the outer membrane of the cell. The sequence is that of Lipid-A-disaccharide synthase from Burkholderia pseudomallei (strain K96243).